The sequence spans 151 residues: Large ribosomal subunit protein bL9 (151 aa).

The protein belongs to the bacterial ribosomal protein bL9 family.

Functionally, binds to the 23S rRNA. The protein is Large ribosomal subunit protein bL9 of Pelobacter propionicus (strain DSM 2379 / NBRC 103807 / OttBd1).